The primary structure comprises 341 residues: Adenine deaminase (341 aa).

Residues His24, His26, and His204 each coordinate Zn(2+). The active-site Proton donor is the Glu207. Asp285 contacts Zn(2+). Substrate is bound at residue Asp286.

It belongs to the metallo-dependent hydrolases superfamily. Adenosine and AMP deaminases family. Adenine deaminase type 2 subfamily. The cofactor is Zn(2+).

The enzyme catalyses adenine + H2O + H(+) = hypoxanthine + NH4(+). Catalyzes the hydrolytic deamination of adenine to hypoxanthine. Plays an important role in the purine salvage pathway and in nitrogen catabolism. The protein is Adenine deaminase of Sphingopyxis alaskensis (strain DSM 13593 / LMG 18877 / RB2256) (Sphingomonas alaskensis).